The following is a 264-amino-acid chain: Thymidylate synthase (264 aa).

Residue R21 coordinates dUMP. Position 51 (H51) interacts with (6R)-5,10-methylene-5,6,7,8-tetrahydrofolate. DUMP is bound at residue 126-127 (RR). The active-site Nucleophile is the C146. DUMP is bound by residues 166 to 169 (RSAD), N177, and 207 to 209 (HLY). D169 lines the (6R)-5,10-methylene-5,6,7,8-tetrahydrofolate pocket. A (6R)-5,10-methylene-5,6,7,8-tetrahydrofolate-binding site is contributed by S263.

It belongs to the thymidylate synthase family. Bacterial-type ThyA subfamily. Homodimer.

The protein localises to the cytoplasm. It catalyses the reaction dUMP + (6R)-5,10-methylene-5,6,7,8-tetrahydrofolate = 7,8-dihydrofolate + dTMP. It functions in the pathway pyrimidine metabolism; dTTP biosynthesis. Functionally, catalyzes the reductive methylation of 2'-deoxyuridine-5'-monophosphate (dUMP) to 2'-deoxythymidine-5'-monophosphate (dTMP) while utilizing 5,10-methylenetetrahydrofolate (mTHF) as the methyl donor and reductant in the reaction, yielding dihydrofolate (DHF) as a by-product. This enzymatic reaction provides an intracellular de novo source of dTMP, an essential precursor for DNA biosynthesis. This Neisseria meningitidis serogroup A / serotype 4A (strain DSM 15465 / Z2491) protein is Thymidylate synthase.